Consider the following 432-residue polypeptide: Asparagine--tRNA ligase (432 aa).

Belongs to the class-II aminoacyl-tRNA synthetase family. As to quaternary structure, homodimer.

It is found in the cytoplasm. The enzyme catalyses tRNA(Asn) + L-asparagine + ATP = L-asparaginyl-tRNA(Asn) + AMP + diphosphate + H(+). This Lactobacillus gasseri (strain ATCC 33323 / DSM 20243 / BCRC 14619 / CIP 102991 / JCM 1131 / KCTC 3163 / NCIMB 11718 / NCTC 13722 / AM63) protein is Asparagine--tRNA ligase.